Here is a 446-residue protein sequence, read N- to C-terminus: Phosphoglucosamine mutase (446 aa).

Residue serine 100 is the Phosphoserine intermediate of the active site. Mg(2+)-binding residues include serine 100, aspartate 241, aspartate 243, and aspartate 245. Residue serine 100 is modified to Phosphoserine.

The protein belongs to the phosphohexose mutase family. It depends on Mg(2+) as a cofactor. Post-translationally, activated by phosphorylation.

The catalysed reaction is alpha-D-glucosamine 1-phosphate = D-glucosamine 6-phosphate. In terms of biological role, catalyzes the conversion of glucosamine-6-phosphate to glucosamine-1-phosphate. This is Phosphoglucosamine mutase from Methylobacterium sp. (strain 4-46).